The primary structure comprises 333 residues: Beta-ketoacyl-[acyl-carrier-protein] synthase III (333 aa).

Catalysis depends on residues C117 and H257. Residues 258–262 (QANLR) form an ACP-binding region. N287 is an active-site residue.

Belongs to the thiolase-like superfamily. FabH family. As to quaternary structure, homodimer.

The protein resides in the cytoplasm. It carries out the reaction malonyl-[ACP] + acetyl-CoA + H(+) = 3-oxobutanoyl-[ACP] + CO2 + CoA. It functions in the pathway lipid metabolism; fatty acid biosynthesis. In terms of biological role, catalyzes the condensation reaction of fatty acid synthesis by the addition to an acyl acceptor of two carbons from malonyl-ACP. Catalyzes the first condensation reaction which initiates fatty acid synthesis and may therefore play a role in governing the total rate of fatty acid production. Possesses both acetoacetyl-ACP synthase and acetyl transacylase activities. Its substrate specificity determines the biosynthesis of branched-chain and/or straight-chain of fatty acids. The sequence is that of Beta-ketoacyl-[acyl-carrier-protein] synthase III from Azobacteroides pseudotrichonymphae genomovar. CFP2.